A 104-amino-acid chain; its full sequence is L-rhamnose mutarotase (104 aa).

Tyr18 contributes to the substrate binding site. His22 (proton donor) is an active-site residue. Residues Tyr41 and Trp76–Trp77 each bind substrate.

The protein belongs to the rhamnose mutarotase family. Homodimer.

The protein resides in the cytoplasm. It carries out the reaction alpha-L-rhamnose = beta-L-rhamnose. It functions in the pathway carbohydrate metabolism; L-rhamnose metabolism. Its function is as follows. Involved in the anomeric conversion of L-rhamnose. The chain is L-rhamnose mutarotase from Escherichia coli O8 (strain IAI1).